A 730-amino-acid chain; its full sequence is Elongation factor 2 (730 aa).

The tr-type G domain occupies 19–260; the sequence is KFIRNIGIVA…MVVKHLPDPF (242 aa). GTP-binding positions include 28 to 35, 94 to 98, and 148 to 151; these read AHIDHGKT, DTPGH, and NKVD. Histidine 597 is modified (diphthamide).

Belongs to the TRAFAC class translation factor GTPase superfamily. Classic translation factor GTPase family. EF-G/EF-2 subfamily.

The protein localises to the cytoplasm. Its function is as follows. Catalyzes the GTP-dependent ribosomal translocation step during translation elongation. During this step, the ribosome changes from the pre-translocational (PRE) to the post-translocational (POST) state as the newly formed A-site-bound peptidyl-tRNA and P-site-bound deacylated tRNA move to the P and E sites, respectively. Catalyzes the coordinated movement of the two tRNA molecules, the mRNA and conformational changes in the ribosome. This chain is Elongation factor 2, found in Methanosphaerula palustris (strain ATCC BAA-1556 / DSM 19958 / E1-9c).